Here is a 345-residue protein sequence, read N- to C-terminus: Beta-2-glycoprotein 1 (345 aa).

Residues 1–19 form the signal peptide; sequence MISPVLILFSSFLCHVAIA. Sushi domains follow at residues 21–81, 82–139, 140–202, and 203–262; these read RTCP…KCTP, RVCP…VCAP, IICP…ECRE, and VKCP…SCKA. 11 disulfides stabilise this stretch: C23/C66, C51/C79, C84/C124, C110/C137, C142/C188, C174/C200, C205/C248, C234/C260, C264/C315, C300/C325, and C307/C345. T33 is a glycosylation site (O-linked (GalNAc...) threonine). O-linked (GalNAc...) threonine glycosylation is present at T149. N162 carries an N-linked (GlcNAc...) (complex) asparagine glycan. N-linked (GlcNAc...) asparagine glycosylation is found at N183 and N193. A glycan (N-linked (GlcNAc...) asparagine) is linked at N253. The segment at 263–345 is sushi-like; it reads SCKVPVKKAT…KTDASDVKPC (83 aa).

In terms of processing, N- and O-glycosylated. PubMed:6587378 also reports glycosylation on 'Asn-188' for their allele. As to expression, expressed by the liver and secreted in plasma.

The protein localises to the secreted. Functionally, binds to various kinds of negatively charged substances such as heparin, phospholipids, and dextran sulfate. May prevent activation of the intrinsic blood coagulation cascade by binding to phospholipids on the surface of damaged cells. This Homo sapiens (Human) protein is Beta-2-glycoprotein 1 (APOH).